A 386-amino-acid chain; its full sequence is Succinate--CoA ligase [ADP-forming] subunit beta (386 aa).

Residues 9 to 244 (KEILRKYGVP…HDEEDPLETR (236 aa)) form the ATP-grasp domain. ATP-binding positions include K46, 53 to 55 (GRG), E99, C102, and E107. Residues N199 and D213 each coordinate Mg(2+). Substrate is bound by residues N264 and 321 to 323 (GIM).

This sequence belongs to the succinate/malate CoA ligase beta subunit family. In terms of assembly, heterotetramer of two alpha and two beta subunits. Requires Mg(2+) as cofactor.

The enzyme catalyses succinate + ATP + CoA = succinyl-CoA + ADP + phosphate. It catalyses the reaction GTP + succinate + CoA = succinyl-CoA + GDP + phosphate. Its pathway is carbohydrate metabolism; tricarboxylic acid cycle; succinate from succinyl-CoA (ligase route): step 1/1. Succinyl-CoA synthetase functions in the citric acid cycle (TCA), coupling the hydrolysis of succinyl-CoA to the synthesis of either ATP or GTP and thus represents the only step of substrate-level phosphorylation in the TCA. The beta subunit provides nucleotide specificity of the enzyme and binds the substrate succinate, while the binding sites for coenzyme A and phosphate are found in the alpha subunit. The sequence is that of Succinate--CoA ligase [ADP-forming] subunit beta from Rickettsia massiliae (strain Mtu5).